Here is a 252-residue protein sequence, read N- to C-terminus: Phosphomannomutase (252 aa).

Asp-13 (nucleophile) is an active-site residue. Positions 13 and 15 each coordinate Mg(2+). Asp-15 functions as the Proton donor/acceptor in the catalytic mechanism. Alpha-D-mannose 1-phosphate is bound by residues Arg-22, Arg-124, Arg-135, Arg-142, Ser-180, and Asp-182. Asp-208, Tyr-220, and Thr-225 together coordinate Mg(2+).

The protein belongs to the eukaryotic PMM family. In terms of assembly, homodimer. Mg(2+) is required as a cofactor. In terms of tissue distribution, expressed in roots, leaves, stems and flowers.

It is found in the cytoplasm. The enzyme catalyses alpha-D-mannose 1-phosphate = D-mannose 6-phosphate. It participates in nucleotide-sugar biosynthesis; GDP-alpha-D-mannose biosynthesis; alpha-D-mannose 1-phosphate from D-fructose 6-phosphate: step 2/2. Functionally, catalyzes the interconversion of mannose-6-phosphate to mannose-1-phosphate, the precursor for the synthesis of GDP-mannose. GDP-mannose is an essential sugar nucleotide for the synthesis of D-mannose-containing cell wall polysaccharides (galactomannans and glucomannans), glycolipids, glycoproteins and the antioxidant L-ascorbate. Involved in the biosynthesis of ascorbate and polysaccharides in response to abiotic stress during seed germination. The chain is Phosphomannomutase from Dendrobium officinale (Orchid).